We begin with the raw amino-acid sequence, 406 residues long: 4-hydroxy-3-methylbut-2-en-1-yl diphosphate synthase (ferredoxin) (406 aa).

[4Fe-4S] cluster-binding residues include Cys-315, Cys-318, Cys-349, and Glu-356.

This sequence belongs to the IspG family. [4Fe-4S] cluster serves as cofactor.

The catalysed reaction is (2E)-4-hydroxy-3-methylbut-2-enyl diphosphate + 2 oxidized [2Fe-2S]-[ferredoxin] + H2O = 2-C-methyl-D-erythritol 2,4-cyclic diphosphate + 2 reduced [2Fe-2S]-[ferredoxin] + H(+). It participates in isoprenoid biosynthesis; isopentenyl diphosphate biosynthesis via DXP pathway; isopentenyl diphosphate from 1-deoxy-D-xylulose 5-phosphate: step 5/6. In terms of biological role, converts 2C-methyl-D-erythritol 2,4-cyclodiphosphate (ME-2,4cPP) into 1-hydroxy-2-methyl-2-(E)-butenyl 4-diphosphate. This is 4-hydroxy-3-methylbut-2-en-1-yl diphosphate synthase (ferredoxin) from Microcystis aeruginosa (strain NIES-843 / IAM M-2473).